We begin with the raw amino-acid sequence, 692 residues long: MLKYAWQSGPKQRNRWLWHLSNQIWKRSYSSKIRNIGILAHIDAGKTTTTERMLFYAGKTRALGEVHRGNTVTDYLTQERERGITICSSAVTFPWNDHRINLLDTPGHIDFTMEVEQSLYAVDGVVVVLDGTAGVEAQTVTVWSQADKHKLPRLIFVNKMDRPDADFEKCVSDLKDKLETQPVCLQYPVKNDDGVLAINDVITLERLSWQKKDLGRSYRNVKLEPSDDLRVLQEKRNELIDQLSGLDDELADVVISTESFDNVDNALIERALRRATAQQKVVPVLLGSAYKNVGIQRLMDAVNAYLPAPEERNQIYDCFGGEIKRGMRLISARGQAEVVSKLYEPLADEYREVGAVQSGDVVICAGLKSTVTGDLLTSTEEDDELDESAELFAIDPQIPDAVYFCSIEPPSVSSQTAMEQALKQLQREDPSLRVSYDSVTGQTVLGGMGELHMDIIKSRILSDYKIDVDLGPLQIAYKETIEAPALTTQSVEKEIAGSKQSVSITLEVVKNQAELFSLDKSPENLPNLNTLRPRILQVLRKGSISALERGPRVGGQVVETQIRLHNATIGRGTADSFVMATAAQCVQKLLSTSGTRLLEPIMALQIVAPSERISGIIADLSRRRALINDVLPKGERNKMILVNAPLAELSGYSSALRTISSGTGSMTMQPCGFSSMNSVDESLAERRAQGLE.

A mitochondrion-targeting transit peptide spans 1 to 29 (MLKYAWQSGPKQRNRWLWHLSNQIWKRSY). The tr-type G domain maps to 31–310 (SKIRNIGILA…AVNAYLPAPE (280 aa)). Residues 40-47 (AHIDAGKT), 104-108 (DTPGH), and 158-161 (NKMD) each bind GTP.

The protein belongs to the TRAFAC class translation factor GTPase superfamily. Classic translation factor GTPase family. EF-G/EF-2 subfamily.

The protein localises to the mitochondrion. Mitochondrial GTPase that mediates the disassembly of ribosomes from messenger RNA at the termination of mitochondrial protein biosynthesis. Not involved in the GTP-dependent ribosomal translocation step during translation elongation. This Drosophila sechellia (Fruit fly) protein is Ribosome-releasing factor 2, mitochondrial.